We begin with the raw amino-acid sequence, 85 residues long: Large ribosomal subunit protein bL27 (85 aa).

The interval 1–20 (MAHKKAGGSTRNGRDSEAKR) is disordered.

It belongs to the bacterial ribosomal protein bL27 family.

This chain is Large ribosomal subunit protein bL27, found in Serratia proteamaculans (strain 568).